The sequence spans 906 residues: Inactive angiotensin-converting enzyme-related protein (906 aa).

Residues methionine 1 to threonine 19 form the signal peptide. Residues leucine 28 to isoleucine 95 form a disordered region. Residues proline 67–proline 83 are compositionally biased toward basic and acidic residues. Residue asparagine 159 is glycosylated (N-linked (GlcNAc...) asparagine). In terms of domain architecture, Peptidase M2 spans isoleucine 175–aspartate 765. Cysteine 289 and cysteine 297 are joined by a disulfide. A glycan (N-linked (GlcNAc...) asparagine) is linked at asparagine 653. The segment at valine 862–proline 882 is disordered. Residues threonine 863–proline 882 are compositionally biased toward low complexity.

Belongs to the peptidase M2 family. As to expression, expressed in the hypodermis, in the vulva during organogenesis, and in the ray papillae of the male tail.

Functionally, inactive as a metallopeptidase, due to a lack of active site residues. Required for larval molting, male tail development, and formation of adult alae. Acts in the heterochronic pathway and plays a role in the developmental timing of postembryonic hypodermal seam cell division and adult alae production. Acts synergistically with apl-1 in let-7 regulated postembryonic cell division events. Might act downstream of the heterochronic protein lin-41. Negative regulator of lifespan, heat and oxidative stress response and age-related degenerative changes like reduced pharyngeal pumping and decreased body movements. Lifespan restriction is dependent on the forkhead-type transcription factor daf-16. In Caenorhabditis elegans, this protein is Inactive angiotensin-converting enzyme-related protein.